Consider the following 112-residue polypeptide: B3 domain-containing protein At1g43171 (112 aa).

The TF-B3 DNA-binding region spans 19-112 (DIVGNVALPK…FENKFIVLNF (94 aa)).

The protein localises to the nucleus. The polypeptide is B3 domain-containing protein At1g43171 (Arabidopsis thaliana (Mouse-ear cress)).